The following is a 365-amino-acid chain: MGVVSFSSTSSGASTATTESGGAVRMSPEPVVAVAAAAQQLPVVKGVDSADEVVTSRPAAAAAQQSSRYKGVVPQPNGRWGAQIYERHARVWLGTFPDEEAAARAYDVAALRYRGRDAATNFPGAAASAAELAFLAAHSKAEIVDMLRKHTYADELRQGLRRGRGMGARAQPTPSWAREPLFEKAVTPSDVGKLNRLVVPKQHAEKHFPLRRAASSDSASAAATGKGVLLNFEDGEGKVWRFRYSYWNSSQSYVLTKGWSRFVREKGLRAGDTIVFSRSAYGPDKLLFIDCKKNNAAAATTTCAGDERPTTSGAEPRVVRLFGVDIAGGDCRKRERAVEMGQEVFLLKRQCVVHQRTPALGALLL.

A disordered region spans residues 1 to 24 (MGVVSFSSTSSGASTATTESGGAV). Positions 68 to 123 (RYKGVVPQPNGRWGAQIYERHARVWLGTFPDEEAAARAYDVAALRYRGRDAATNFP) form a DNA-binding region, AP2/ERF. A DNA-binding region (TF-B3) is located at residues 182–294 (FEKAVTPSDV…KLLFIDCKKN (113 aa)).

The protein localises to the nucleus. In Oryza sativa subsp. japonica (Rice), this protein is AP2/ERF and B3 domain-containing protein Os01g0141000.